Here is a 640-residue protein sequence, read N- to C-terminus: Threonine--tRNA ligase (640 aa).

The segment at 224–525 is catalytic; sequence DHRKLGKELD…LTEHYAGAFP (302 aa). Residues Cys-323, His-374, and His-502 each coordinate Zn(2+).

This sequence belongs to the class-II aminoacyl-tRNA synthetase family. As to quaternary structure, homodimer. It depends on Zn(2+) as a cofactor.

It is found in the cytoplasm. The catalysed reaction is tRNA(Thr) + L-threonine + ATP = L-threonyl-tRNA(Thr) + AMP + diphosphate + H(+). In terms of biological role, catalyzes the attachment of threonine to tRNA(Thr) in a two-step reaction: L-threonine is first activated by ATP to form Thr-AMP and then transferred to the acceptor end of tRNA(Thr). Also edits incorrectly charged L-seryl-tRNA(Thr). The chain is Threonine--tRNA ligase from Tropheryma whipplei (strain TW08/27) (Whipple's bacillus).